The sequence spans 103 residues: Large ribosomal subunit protein uL24 (103 aa).

This sequence belongs to the universal ribosomal protein uL24 family. Part of the 50S ribosomal subunit.

Functionally, one of two assembly initiator proteins, it binds directly to the 5'-end of the 23S rRNA, where it nucleates assembly of the 50S subunit. One of the proteins that surrounds the polypeptide exit tunnel on the outside of the subunit. This Brucella ovis (strain ATCC 25840 / 63/290 / NCTC 10512) protein is Large ribosomal subunit protein uL24.